The following is a 296-amino-acid chain: Glycine N-acyltransferase-like protein (296 aa).

Position 41 is an N6-acetyllysine; alternate (lysine 41). Lysine 41 is subject to N6-succinyllysine; alternate. The residue at position 43 (lysine 43) is an N6-acetyllysine. Residue lysine 48 is modified to N6-acetyllysine; alternate. An N6-succinyllysine; alternate modification is found at lysine 48. Residues lysine 80 and lysine 83 each carry the N6-acetyllysine modification. N6-acetyllysine; alternate is present on residues lysine 183 and lysine 256. N6-succinyllysine; alternate is present on residues lysine 183 and lysine 256.

The protein belongs to the glycine N-acyltransferase family.

The protein resides in the mitochondrion. The catalysed reaction is an acyl-CoA + glycine = an N-acylglycine + CoA + H(+). Its function is as follows. Mitochondrial acyltransferase which transfers the acyl group to the N-terminus of glycine. Can conjugate a multitude of substrates to form a variety of N-acylglycines. The sequence is that of Glycine N-acyltransferase-like protein (Gm4952) from Mus musculus (Mouse).